Here is a 576-residue protein sequence, read N- to C-terminus: Insulin-like growth factor 2 mRNA-binding protein 1 (576 aa).

2 consecutive RRM domains span residues 2-75 and 81-156; these read NKLY…HSVP and RKIQ…YIPD. The tract at residues 158-189 is disordered; that stretch reads QSVQGPENGRRGGFGARGAPRQGSPVTAGAPV. 2 KH domains span residues 195–260 and 276–343; these read DIPL…CKMI and EVPL…EQEI. Tyrosine 396 carries the post-translational modification Phosphotyrosine; by SRC. KH domains are found at residues 404 to 469 and 486 to 552; these read QETV…QGRI and KLET…QRKI.

The protein belongs to the RRM IMP/VICKZ family. Can form homooligomers and heterooligomers with IGF2BP1 and IGF2BP3 in an RNA-dependent manner. Associates with the cytoskeleton, predominantly with actin filament bundles and occasionally with microtubules. In a heterologous system, interacts with ELAVL1, DHX9 and HNRNPU. Phosphorylated by SRC at Tyr-396. This residue is involved in ACTB mRNA binding, its phosphorylation impairs association with ACTB mRNA and hence abolishes translational repression. Phosphorylation occurs in close proximity to filopodia and in the growth cones of differentiated neuroglioblastoma cells. As to expression, expressed in neurons and embryonic fibroblasts (at protein level).

Its subcellular location is the nucleus. It is found in the cytoplasm. The protein localises to the perinuclear region. It localises to the P-body. The protein resides in the stress granule. Its subcellular location is the cell projection. It is found in the growth cone. The protein localises to the filopodium. It localises to the lamellipodium. Functionally, RNA-binding factor that recruits target transcripts to cytoplasmic protein-RNA complexes (mRNPs). This transcript 'caging' into mRNPs allows mRNA transport and transient storage. It also modulates the rate and location at which target transcripts encounter the translational apparatus and shields them from endonuclease attacks or microRNA-mediated degradation. Preferentially binds to N6-methyladenosine (m6A)-containing mRNAs and increases their stability. Plays a direct role in the transport and translation of transcripts required for axonal regeneration in adult sensory neurons. Regulates localized beta-actin/ACTB mRNA translation in polarized cells, a crucial process for cell migration and neurite outgrowth. Co-transcriptionally associates with the ACTB mRNA in the nucleus. This binding involves by a conserved 54-nucleotide element in the ACTB mRNA 3'-UTR, known as the 'zipcode'. The ribonucleoparticle (RNP) thus formed is exported to the cytoplasm, binds to a motor protein and is transported along the cytoskeleton to the cell periphery. During transport, IGF2BP1 prevents beta-actin mRNA from being translated into protein. When the RNP complex reaches its destination near the plasma membrane, IGF2BP1 is phosphorylated by SRC. This releases the mRNA, allowing ribosomal 40S and 60S subunits to assemble and initiate ACTB protein synthesis. The monomeric ACTB protein then assembles into the subcortical actin cytoskeleton, which pushes the leading edge onwards. Binds MYC mRNA. Binding to MYC mRNA is enhanced by m6A-modification of the CRD. Promotes the directed movement of cells by fine-tuning intracellular signaling networks. Binds to MAPK4 3'-UTR and inhibits its translation. Interacts with PTEN transcript open reading frame (ORF) and prevents mRNA decay. This combined action on MAPK4 (down-regulation) and PTEN (up-regulation) antagonizes HSPB1 phosphorylation, consequently it prevents G-actin sequestration by phosphorylated HSPB1, allowing F-actin polymerization. Hence enhances the velocity of cell migration and stimulates directed cell migration by PTEN-modulated polarization. The sequence is that of Insulin-like growth factor 2 mRNA-binding protein 1 (IGF2BP1) from Gallus gallus (Chicken).